Here is a 2549-residue protein sequence, read N- to C-terminus: Serine/threonine-protein kinase mTOR (2549 aa).

Met-1 carries the post-translational modification N-acetylmethionine. Positions 1–651 (MLGTGPATAT…HVVSQTAVQV (651 aa)) are interaction with NBN. 32 HEAT repeats span residues 16-53 (SSNV…MELR), 55-99 (MSQE…VEGG), 100-137 (NSTR…AMAG), 138-179 (DTFT…AISV), 180-220 (PTFF…LILT), 222-276 (QREP…RISS), 277-313 (MEGE…PRHI), 314-364 (TPFT…CCRD), 365-409 (LMEE…AFTD), 410-445 (TQYL…VAVR), 446-494 (SEFK…RAMG), 495-529 (PGIQ…RQIP), 530-563 (QLKK…GLAH), 564-596 (QLAS…EFEG), 597-636 (HSLT…SIHL), 637-683 (ISGH…DERF), 686-724 (HLAQ…MNPA), 727-766 (MPFL…NAPR), 769-811 (RPYM…VSGL), 814-853 (RKWV…STGY), 857-893 (PYRK…LLGA), 894-942 (LDPY…GNLP), 943-988 (LDEF…KCVQ), 989-1027 (FLPQ…KSHI), 1029-1068 (PYMD…GEFK), 1069-1105 (LYLP…LFGA), 1106-1144 (NLDD…RLTE), 1145-1188 (SLDF…GKKY), 1189-1225 (QIFI…LADE), 1226-1273 (EEDP…GAAR), 1274-1311 (RVSK…QAYN), and 1312-1345 (PMAR…ELAL). Ser-567 carries the phosphoserine modification. Thr-1162 is modified (phosphothreonine). The residue at position 1218 (Lys-1218) is an N6-acetyllysine. Phosphoserine is present on Ser-1261. TPR repeat units follow at residues 1346–1382 (TSQD…GIVL), 1383–1408 (LGER…QKGP), 1409–1442 (TPAI…HFGE), 1443–1473 (LEIQ…NKDD), 1474–1507 (PELM…VNDE), 1508–1541 (TQAK…RDTH), 1542–1574 (DGAF…LDAE), 1575–1614 (LTAM…RREI), 1615–1649 (IRQI…PHED), 1650–1693 (MRTW…PTVH), 1694–1731 (PQVT…AQHA), 1732–1786 (IATE…DRSW), 1787–1846 (YKAW…STEG), 1898–1930 (NNLQ…VKAI), 1931–1970 (QIDT…YHPQ), and 1971–2005 (ALIY…SNTL). An FAT domain is found at 1382 to 1982 (LLGERAAKCR…IYPLTVASKS (601 aa)). 1D-myo-inositol hexakisphosphate is bound by residues Lys-1662, Lys-1702, and Arg-1749. A disordered region spans residues 1812–1867 (DEKKKLRHASGANITNATTTATTAASAAAATSTEGSNSESEAESNESSPTPSPLQK). Over residues 1826-1860 (TNATTTATTAASAAAATSTEGSNSESEAESNESSP) the composition is skewed to low complexity. Positions 2012-2144 (VSEELIRVAI…DLELAVPGTY (133 aa)) are sufficient for interaction with the FKBP1A/rapamycin complex. A Glycyl lysine isopeptide (Lys-Gly) (interchain with G-Cter in ubiquitin) cross-link involves residue Lys-2066. In terms of domain architecture, PI3K/PI4K catalytic spans 2156–2469 (IAPSLQVITS…GVELGEPAHK (314 aa)). Ser-2159 is subject to Phosphoserine. Residues 2162-2168 (VITSKQR) are G-loop. Thr-2164 carries the phosphothreonine modification. Residues Ser-2165 and Gln-2167 each contribute to the ATP site. Thr-2173 carries the post-translational modification Phosphothreonine; by PKB/AKT1. Leu-2185, Lys-2187, Glu-2190, Tyr-2225, Gly-2238, Trp-2239, Val-2240, and Thr-2245 together coordinate ATP. Positions 2258-2296 (KILLNIEHRIMLRMAPDYDHLTLMQKVEVFEHAVNNTAG) are interaction with MLST8. Positions 2335–2343 (GLGDRHPSN) are catalytic loop. Asn-2343 lines the Mg(2+) pocket. ATP contacts are provided by Met-2345 and Ile-2356. Positions 2355 to 2380 (HIDFGDCFEVAMTREKFPEKIPFRLT) are activation loop. A Mg(2+)-binding site is contributed by Asp-2357. A Phosphothreonine; by RPS6KB1 modification is found at Thr-2446. Ser-2448 is modified (phosphoserine; by RPS6KB1). A Phosphoserine modification is found at Ser-2478. The residue at position 2481 (Ser-2481) is a Phosphoserine; by autocatalysis. The FATC domain maps to 2517 to 2549 (DTLDVPTQVELLIKQATSHENLCQCYIGWCPFW).

Belongs to the PI3/PI4-kinase family. In terms of assembly, part of the mechanistic target of rapamycin complex 1 (mTORC1) which contains MTOR, MLST8 and RPTOR. The mTORC1 complex is a 1 Md obligate dimer of two stoichiometric heterotetramers with overall dimensions of 290 A x 210 A x 135 A. It has a rhomboid shape and a central cavity, the dimeric interfaces are formed by interlocking interactions between the two MTOR and the two RPTOR subunits. The MLST8 subunit forms distal foot-like protuberances, and contacts only one MTOR within the complex, while the small AKT1S1/PRAS40 localizes to the midsection of the central core, in close proximity to RPTOR. mTORC1 associates with AKT1S1/PRAS40, which inhibits its activity by blocking MTOR substrate-recruitment site. Component of the mechanistic target of rapamycin complex 2 (mTORC2), consisting in two heterotretramers composed of MTOR, MLST8, RICTOR and MAPKAP1/SIN1. Interacts with PLPP7 and PML. Interacts with PRR5 and RICTOR; the interaction is direct within the mTORC2 complex and interaction with RICTOR is enhanced by deubiquitination of RICTOR by USP9X. mTORC1 and mTORC2 associate with DEPTOR, which regulates their activity. Interacts with WAC; WAC positively regulates MTOR activity by promoting the assembly of the TTT complex composed of TELO2, TTI1 and TTI2 and the RUVBL complex composed of RUVBL1 and RUVBL2 into the TTT-RUVBL complex which leads to the dimerization of the mTORC1 complex and its subsequent activation. Interacts with UBQLN1. Interacts with TTI1 and TELO2. Interacts with CLIP1; phosphorylates and regulates CLIP1. Interacts with NBN. Interacts with HTR6. Interacts with BRAT1. Interacts with MEAK7 (via C-terminal domain); the interaction increases upon nutrient stimulation. Interacts with TM4SF5; the interaction is positively regulated by arginine and is negatively regulated by leucine. Interacts with GPR137B. Interacts with NCKAP1L. Interacts with TPCN1 and TPCN2; the interaction is required for TPCN1 and TPCN2 sensitivity to ATP. Interacts with ATP6V1A and with CRYAB, forming a ternary complex. Interacts with SLC38A7; this interaction mediates the recruitment of mTORC1 to the lysosome and its subsequent activation. Interacts with TSPAN8. In terms of processing, autophosphorylates when part of mTORC1 or mTORC2. Phosphorylation at Ser-1261, Ser-2159 and Thr-2164 promotes autophosphorylation. Phosphorylated at Ser-2448 by RPS6KB1. Phosphorylation in the kinase domain modulates the interactions of MTOR with RPTOR and AKT1S1/PRAS40 and leads to increased intrinsic mTORC1 kinase activity. Phosphorylation at Ser-2159 by TBK1 in response to growth factors and pathogen recognition receptors promotes mTORC1 activity. Phosphorylation at Ser-2159 by TBK1 in response to EGF growth factor promotes mTORC2 activity, leading to AKT1 phosphorylation and activation. Phosphorylation at Thr-2173 in the ATP-binding region by AKT1 strongly reduces kinase activity. Ubiquitinated at Lys-2066 by the SCF(FBXO22) complex via 'Lys-27'-linked ubiquitination prevents mTORC1 substrate recruitment.

The protein localises to the lysosome membrane. It localises to the endoplasmic reticulum membrane. The protein resides in the golgi apparatus membrane. Its subcellular location is the cell membrane. It is found in the mitochondrion outer membrane. The protein localises to the cytoplasm. It localises to the nucleus. The protein resides in the PML body. Its subcellular location is the microsome membrane. It is found in the cytoplasmic vesicle. The protein localises to the phagosome. It catalyses the reaction L-seryl-[protein] + ATP = O-phospho-L-seryl-[protein] + ADP + H(+). The catalysed reaction is L-threonyl-[protein] + ATP = O-phospho-L-threonyl-[protein] + ADP + H(+). It carries out the reaction L-tyrosyl-[protein] + ATP = O-phospho-L-tyrosyl-[protein] + ADP + H(+). With respect to regulation, the mTORC1 complex is activated in response to nutrients, growth factors or amino acids: activation requires relocalization of the mTORC1 complex to lysosomes that is mediated by the Ragulator complex, SLC38A9, and the Rag GTPases RagA/RRAGA, RagB/RRAGB, RagC/RRAGC and RagD/RRAGD. Activation of mTORC1 by growth factors such as insulin involves AKT1-mediated phosphorylation of TSC1-TSC2, which leads to the activation of the RHEB GTPase a potent activator of the protein kinase activity of mTORC1. Insulin-stimulated and amino acid-dependent phosphorylation at Ser-1261 promotes autophosphorylation and the activation of mTORC1. On the other hand, low cellular energy levels can inhibit mTORC1 through activation of PRKAA1 while hypoxia inhibits mTORC1 through a REDD1-dependent mechanism which may also require PRKAA1. The kinase activity of MTOR within the mTORC1 complex is positively regulated by MLST8. The kinase activity of MTOR is inhibited by DEPTOR and AKT1S1. The non-canonical mTORC1 complex is independent of the RHEB GTPase and specifically mediates phosphorylation of MiT/TFE factors TFEB and TFE3 but not other mTORC1 substrates: it is activated by FLCN, which activates Rag GTPases RagC/RRAGC and RagD/RRAGD. MTOR is the target of the immunosuppressive and anti-cancer drug rapamycin which acts in complex with FKBP1A/FKBP12, and specifically inhibits its kinase activity. mTORC2 is also activated by growth factors, but seems to be nutrient-insensitive. mTORC2 associates and is directly activated by ribosomes. mTORC2 may also be regulated by RHEB but in an indirect manner through the PI3K signaling pathway. Its function is as follows. Serine/threonine protein kinase which is a central regulator of cellular metabolism, growth and survival in response to hormones, growth factors, nutrients, energy and stress signals. MTOR directly or indirectly regulates the phosphorylation of at least 800 proteins. Functions as part of 2 structurally and functionally distinct signaling complexes mTORC1 and mTORC2 (mTOR complex 1 and 2). In response to nutrients, growth factors or amino acids, mTORC1 is recruited to the lysosome membrane and promotes protein, lipid and nucleotide synthesis by phosphorylating key regulators of mRNA translation and ribosome synthesis. This includes phosphorylation of EIF4EBP1 and release of its inhibition toward the elongation initiation factor 4E (eiF4E). Moreover, phosphorylates and activates RPS6KB1 and RPS6KB2 that promote protein synthesis by modulating the activity of their downstream targets including ribosomal protein S6, eukaryotic translation initiation factor EIF4B, and the inhibitor of translation initiation PDCD4. Stimulates the pyrimidine biosynthesis pathway, both by acute regulation through RPS6KB1-mediated phosphorylation of the biosynthetic enzyme CAD, and delayed regulation, through transcriptional enhancement of the pentose phosphate pathway which produces 5-phosphoribosyl-1-pyrophosphate (PRPP), an allosteric activator of CAD at a later step in synthesis, this function is dependent on the mTORC1 complex. Regulates ribosome synthesis by activating RNA polymerase III-dependent transcription through phosphorylation and inhibition of MAF1 an RNA polymerase III-repressor. Activates dormant ribosomes by mediating phosphorylation of SERBP1, leading to SERBP1 inactivation and reactivation of translation. In parallel to protein synthesis, also regulates lipid synthesis through SREBF1/SREBP1 and LPIN1. To maintain energy homeostasis mTORC1 may also regulate mitochondrial biogenesis through regulation of PPARGC1A. In the same time, mTORC1 inhibits catabolic pathways: negatively regulates autophagy through phosphorylation of ULK1. Under nutrient sufficiency, phosphorylates ULK1 at 'Ser-758', disrupting the interaction with AMPK and preventing activation of ULK1. Also prevents autophagy through phosphorylation of the autophagy inhibitor DAP. Also prevents autophagy by phosphorylating RUBCNL/Pacer under nutrient-rich conditions. Prevents autophagy by mediating phosphorylation of AMBRA1, thereby inhibiting AMBRA1 ability to mediate ubiquitination of ULK1 and interaction between AMBRA1 and PPP2CA. mTORC1 exerts a feedback control on upstream growth factor signaling that includes phosphorylation and activation of GRB10 a INSR-dependent signaling suppressor. Among other potential targets mTORC1 may phosphorylate CLIP1 and regulate microtubules. The mTORC1 complex is inhibited in response to starvation and amino acid depletion. The non-canonical mTORC1 complex, which acts independently of RHEB, specifically mediates phosphorylation of MiT/TFE factors TFEB and TFE3 in the presence of nutrients, promoting their cytosolic retention and inactivation. Upon starvation or lysosomal stress, inhibition of mTORC1 induces dephosphorylation and nuclear translocation of TFEB and TFE3, promoting their transcription factor activity. The mTORC1 complex regulates pyroptosis in macrophages by promoting GSDMD oligomerization. MTOR phosphorylates RPTOR which in turn inhibits mTORC1. As part of the mTORC2 complex, MTOR transduces signals from growth factors to pathways involved in proliferation, cytoskeletal organization, lipogenesis and anabolic output. In response to growth factors, mTORC2 phosphorylates and activates AGC protein kinase family members, including AKT (AKT1, AKT2 and AKT3), PKC (PRKCA, PRKCB and PRKCE) and SGK1. In contrast to mTORC1, mTORC2 is nutrient-insensitive. mTORC2 plays a critical role in AKT1 activation by mediating phosphorylation of different sites depending on the context, such as 'Thr-450', 'Ser-473', 'Ser-477' or 'Thr-479', facilitating the phosphorylation of the activation loop of AKT1 on 'Thr-308' by PDPK1/PDK1 which is a prerequisite for full activation. mTORC2 also regulates the phosphorylation of SGK1 at 'Ser-422'. mTORC2 may regulate the actin cytoskeleton, through phosphorylation of PRKCA, PXN and activation of the Rho-type guanine nucleotide exchange factors RHOA and RAC1A or RAC1B. The mTORC2 complex also phosphorylates various proteins involved in insulin signaling, such as FBXW8 and IGF2BP1. May also regulate insulin signaling by acting as a tyrosine protein kinase that catalyzes phosphorylation of IGF1R and INSR. Regulates osteoclastogenesis by adjusting the expression of CEBPB isoforms. Plays an important regulatory role in the circadian clock function; regulates period length and rhythm amplitude of the suprachiasmatic nucleus (SCN) and liver clocks. This Rattus norvegicus (Rat) protein is Serine/threonine-protein kinase mTOR.